Consider the following 444-residue polypeptide: Pentatricopeptide repeat-containing protein At4g35850, mitochondrial (444 aa).

Residues 1 to 25 (MKFLMQSISGRNRSLVRALVSRRYF) constitute a mitochondrion transit peptide. PPR repeat units follow at residues 40–74 (DLSE…GVQP), 75–109 (TADI…GIAP), 110–144 (DVNL…DVKP), 145–179 (NGQT…GVGL), 255–289 (NLTV…GKDT), and 290–325 (DTYC…KIPA).

The protein belongs to the PPR family. P subfamily.

The protein localises to the mitochondrion. This Arabidopsis thaliana (Mouse-ear cress) protein is Pentatricopeptide repeat-containing protein At4g35850, mitochondrial.